The sequence spans 643 residues: Methyl-accepting chemotaxis protein McpA (643 aa).

The helical transmembrane segment at 24–44 (ILLSACGVVVLAFALFTLYND) threads the bilayer. Residues 49–273 (NTIRQNIEAS…GLPSAQWYIG (225 aa)) enclose the Cache domain. A helical transmembrane segment spans residues 293 to 313 (IIAMLIAVAAIAGLLGLLIPV). Residues 312 to 366 (PVLMSPLTTMGRAMRDIAEGEGDLTRRLAVQNKDEFGELATSFNRFVERIHASIS) form the HAMP domain. The region spanning 371–607 (ATRLVHDLSE…SLNLDITQIN (237 aa)) is the Methyl-accepting transducer domain.

It belongs to the methyl-accepting chemotaxis (MCP) protein family.

The protein localises to the cell membrane. Functionally, chemotactic-signal transducers respond to changes in the concentration of attractants and repellents in the environment, transduce a signal from the outside to the inside of the cell, and facilitate sensory adaptation through the variation of the level of methylation. McpA is a chemoreceptor that binds to 12 different L-amino acids and mediates chemotaxis toward these amino acids. This is Methyl-accepting chemotaxis protein McpA from Pseudomonas putida (strain ATCC 47054 / DSM 6125 / CFBP 8728 / NCIMB 11950 / KT2440).